The chain runs to 651 residues: Altered inheritance of mitochondria protein 21 (651 aa).

Residues 1-85 (MPSEVTPKVP…LQRPVRRSTT (85 aa)) form a disordered region. The span at 9 to 19 (VPERPSRRKTS) shows a compositional bias: basic and acidic residues. Threonine 18 carries the phosphothreonine modification. The residue at position 36 (serine 36) is a Phosphoserine. The residue at position 58 (threonine 58) is a Phosphothreonine. Serine 70 carries the post-translational modification Phosphoserine. Position 85 is a phosphothreonine (threonine 85). Serine 104 is subject to Phosphoserine. The span at 110–119 (NIHNVSRKKS) shows a compositional bias: basic residues. 2 disordered regions span residues 110-522 (NIHN…EKIE) and 549-651 (IDTT…FHSL). 2 stretches are compositionally biased toward polar residues: residues 133 to 149 (QNGQRSASDNKTSTNPS) and 164 to 178 (SAISPSNLVNKSNNE). Basic and acidic residues predominate over residues 179–213 (VTEHSDSEDLTEKQKVHAALDNEAGDRSHFEEKLI). Residues serine 183, serine 206, and serine 231 each carry the phosphoserine modification. Residues 243–272 (SDDKAEKFTKHPESSLEELQKHQEQQEEKI) show a composition bias toward basic and acidic residues. Threonine 277 is modified (phosphothreonine). A Phosphoserine modification is found at serine 284. Polar residues predominate over residues 296–323 (EVNSQPQGPSDTETVIAATSSNVPSQIA). Position 324 is a phosphoserine (serine 324). 2 stretches are compositionally biased toward basic and acidic residues: residues 339 to 361 (KKDFEAHVQKEELPNTQEKRVSE) and 372 to 383 (EESKIPKIPSER). Residues 383-396 (RPKRRAPPPVPKKP) form an interaction with SH3 domain of ABP1 region. 2 stretches are compositionally biased toward polar residues: residues 414–427 (DLHNNGNSSATTAS) and 437–452 (SSITSDTTKADFTSKL). Residues 471 to 482 (LEKKLSSPDTES) are compositionally biased toward basic and acidic residues. Residues 501 to 512 (RRGRGPRGRKLP) are compositionally biased toward basic residues. Threonine 552 is subject to Phosphothreonine. Over residues 556–567 (QAERALDEKEKL) the composition is skewed to basic and acidic residues. Positions 575 to 586 (PLSQLPQTNTVG) are enriched in polar residues. 8 positions are modified to phosphoserine: serine 592, serine 595, serine 597, serine 599, serine 639, serine 643, serine 647, and serine 650. Residues 594-605 (ESLSPSEAITNR) show a composition bias toward polar residues. Residues 639 to 651 (SALHSEEASFHSL) show a composition bias toward basic and acidic residues.

It belongs to the AIM21 family. In terms of assembly, interacts with ribosomes. Interacts with ABP1.

The protein localises to the cytoplasm. The protein resides in the cytoskeleton. It is found in the actin patch. In terms of biological role, involved in mitochondrial migration along actin filaments. The sequence is that of Altered inheritance of mitochondria protein 21 (AIM21) from Saccharomyces cerevisiae (strain RM11-1a) (Baker's yeast).